The primary structure comprises 368 residues: C6 finger domain transcription factor tcpZ (368 aa).

The segment at residues 30-56 (CDACHASKVRCSGEPICARCQRDNVAC) is a DNA-binding region (zn(2)-C6 fungal-type). A disordered region spans residues 84 to 109 (FIEQRQRPAASQPPGHGTSRDSSVCA).

It localises to the nucleus. Functionally, transcription factor that specifically regulates the thioclapurine biosynthesis gene cluster. This Claviceps purpurea (strain 20.1) (Ergot fungus) protein is C6 finger domain transcription factor tcpZ.